The primary structure comprises 231 residues: N-acetylmuramate alpha-1-phosphate uridylyltransferase (231 aa).

UTP is bound by residues 11–13 and K23; that span reads GER. N106 provides a ligand contact to substrate. D108 contributes to the Mg(2+) binding site. 2 residues coordinate substrate: D146 and D213. D213 is a binding site for Mg(2+).

This sequence belongs to the nucleotidyltransferase MurU family. As to quaternary structure, monomer. The cofactor is Mg(2+).

It carries out the reaction N-acetyl-alpha-D-muramate 1-phosphate + UDP + H(+) = UDP-N-acetyl-alpha-D-muramate + phosphate. The protein operates within cell wall biogenesis; peptidoglycan recycling. Functionally, catalyzes the formation of UDP-N-acetylmuramate (UDP-MurNAc), a crucial precursor of the bacterial peptidoglycan cell wall, from UTP and MurNAc-alpha-1P. Is likely involved in peptidoglycan recycling as part of a cell wall recycling pathway that bypasses de novo biosynthesis of the peptidoglycan precursor UDP-MurNAc. Is able to complement the fosfomycin sensitivity phenotype of a P.putida mutant lacking murU. The chain is N-acetylmuramate alpha-1-phosphate uridylyltransferase from Neisseria meningitidis serogroup B (strain ATCC BAA-335 / MC58).